Consider the following 438-residue polypeptide: Trigger factor (438 aa).

One can recognise a PPIase FKBP-type domain in the interval Gly-170 to Pro-255.

This sequence belongs to the FKBP-type PPIase family. Tig subfamily.

The protein resides in the cytoplasm. It carries out the reaction [protein]-peptidylproline (omega=180) = [protein]-peptidylproline (omega=0). Its function is as follows. Involved in protein export. Acts as a chaperone by maintaining the newly synthesized protein in an open conformation. Functions as a peptidyl-prolyl cis-trans isomerase. This chain is Trigger factor (tig), found in Oenococcus oeni (Leuconostoc oenos).